A 361-amino-acid polypeptide reads, in one-letter code: Serpentine receptor class X 45 (361 aa).

Helical transmembrane passes span 20–40 (LLIF…AFYI), 58–78 (AAGD…VLFF), 92–112 (FAQL…VISL), 133–153 (TTFL…FLVI), 176–196 (MINV…MFAI), 242–262 (LLYV…PVPL), and 278–298 (LLTT…TLIF). Asparagine 317 carries N-linked (GlcNAc...) asparagine glycosylation.

The protein belongs to the G-protein coupled receptor 1 family.

It is found in the cell membrane. The sequence is that of Serpentine receptor class X 45 (srx-45) from Caenorhabditis elegans.